The sequence spans 279 residues: Release factor glutamine methyltransferase (279 aa).

Residues Asp-139 and Asn-182 each coordinate S-adenosyl-L-methionine. Residue 182–185 participates in substrate binding; sequence NPPY.

It belongs to the protein N5-glutamine methyltransferase family. PrmC subfamily.

The catalysed reaction is L-glutaminyl-[peptide chain release factor] + S-adenosyl-L-methionine = N(5)-methyl-L-glutaminyl-[peptide chain release factor] + S-adenosyl-L-homocysteine + H(+). In terms of biological role, methylates the class 1 translation termination release factors RF1/PrfA and RF2/PrfB on the glutamine residue of the universally conserved GGQ motif. This is Release factor glutamine methyltransferase from Thermodesulfovibrio yellowstonii (strain ATCC 51303 / DSM 11347 / YP87).